The following is a 196-amino-acid chain: Probable molybdenum cofactor guanylyltransferase (196 aa).

GTP is bound by residues 7-9 (LAG), lysine 19, aspartate 68, and aspartate 93. Residue aspartate 93 participates in Mg(2+) binding.

It belongs to the MobA family. Mg(2+) is required as a cofactor.

The protein localises to the cytoplasm. It carries out the reaction Mo-molybdopterin + GTP + H(+) = Mo-molybdopterin guanine dinucleotide + diphosphate. Transfers a GMP moiety from GTP to Mo-molybdopterin (Mo-MPT) cofactor (Moco or molybdenum cofactor) to form Mo-molybdopterin guanine dinucleotide (Mo-MGD) cofactor. This chain is Probable molybdenum cofactor guanylyltransferase, found in Pyrococcus furiosus (strain ATCC 43587 / DSM 3638 / JCM 8422 / Vc1).